The sequence spans 371 residues: Maltose/maltodextrin import ATP-binding protein MalK (371 aa).

An ABC transporter domain is found at 4-234 (VQLQNVTKAW…PADRFVAGFI (231 aa)). Residue 36-43 (GPSGCGKS) participates in ATP binding.

Belongs to the ABC transporter superfamily. Maltooligosaccharide importer (TC 3.A.1.1.1) family. The complex is composed of two ATP-binding proteins (MalK), two transmembrane proteins (MalG and MalK) and a solute-binding protein (MalE).

Its subcellular location is the cell inner membrane. The catalysed reaction is D-maltose(out) + ATP + H2O = D-maltose(in) + ADP + phosphate + H(+). Its function is as follows. Part of the ABC transporter complex MalEFGK involved in maltose/maltodextrin import. Responsible for energy coupling to the transport system. This Escherichia coli O6:H1 (strain CFT073 / ATCC 700928 / UPEC) protein is Maltose/maltodextrin import ATP-binding protein MalK.